Consider the following 415-residue polypeptide: MDGNENPNPARTSLWRNARLATLREELGPLGIIEDGVIAVRGERIVYAGPEAGLPSELARADQVFDCEGRWVTPALIDCHTHIVHGGNRAREFQLRLEGATYEEIARAGGGIASTVEATNALSVEALVEAALPRLDTLLAEGVSTVEVKSGYGLNVEAELKMLRAARRLESLRPVRIVTSYLAAHATPPEFRGRNGDYIAEVVLPGLTAAHAEGLADAVDGFCEGIAFSPAEIASVFGRAKSLGLPVKLHAEQLSDLGGAKLAASYGALSADHLEYLDAAGAAAMAKAGTVAVLLPGAFYTLREKQLPPVEALREAGTRIAIATDCNPGTSPLTSLLLTLNMSATLFRLTLEECLAGVTREAARALGILGETGTIEAGKSADLAIWNIDQPAELIYRIGFNPLRERIFKGERILR.

Fe(3+) is bound by residues H80 and H82. 2 residues coordinate Zn(2+): H80 and H82. Residues R89, Y152, and H185 each contribute to the 4-imidazolone-5-propanoate site. Y152 contacts N-formimidoyl-L-glutamate. A Fe(3+)-binding site is contributed by H250. H250 is a Zn(2+) binding site. Residue Q253 participates in 4-imidazolone-5-propanoate binding. D325 is a Fe(3+) binding site. D325 provides a ligand contact to Zn(2+). N-formimidoyl-L-glutamate-binding residues include N327 and G329. T330 contacts 4-imidazolone-5-propanoate.

The protein belongs to the metallo-dependent hydrolases superfamily. HutI family. It depends on Zn(2+) as a cofactor. Requires Fe(3+) as cofactor.

It localises to the cytoplasm. It carries out the reaction 4-imidazolone-5-propanoate + H2O = N-formimidoyl-L-glutamate. It participates in amino-acid degradation; L-histidine degradation into L-glutamate; N-formimidoyl-L-glutamate from L-histidine: step 3/3. Functionally, catalyzes the hydrolytic cleavage of the carbon-nitrogen bond in imidazolone-5-propanoate to yield N-formimidoyl-L-glutamate. It is the third step in the universal histidine degradation pathway. The sequence is that of Imidazolonepropionase from Rhizobium meliloti (strain 1021) (Ensifer meliloti).